The chain runs to 459 residues: tRNA modification GTPase MnmE (459 aa).

Residues Arg21, Glu84, and Arg123 each contribute to the (6S)-5-formyl-5,6,7,8-tetrahydrofolate site. Residues 219–378 (GVTVALAGAV…LLVLLYNFVL (160 aa)) enclose the TrmE-type G domain. Residues 229-234 (NAGKSS), 248-254 (TEHPGTT), and 273-276 (DTAG) contribute to the GTP site. Residues Ser233 and Thr254 each contribute to the Mg(2+) site. Position 459 (Lys459) interacts with (6S)-5-formyl-5,6,7,8-tetrahydrofolate.

The protein belongs to the TRAFAC class TrmE-Era-EngA-EngB-Septin-like GTPase superfamily. TrmE GTPase family. As to quaternary structure, homodimer. Heterotetramer of two MnmE and two MnmG subunits. Requires K(+) as cofactor.

Its subcellular location is the cytoplasm. In terms of biological role, exhibits a very high intrinsic GTPase hydrolysis rate. Involved in the addition of a carboxymethylaminomethyl (cmnm) group at the wobble position (U34) of certain tRNAs, forming tRNA-cmnm(5)s(2)U34. The protein is tRNA modification GTPase MnmE of Lawsonia intracellularis (strain PHE/MN1-00).